We begin with the raw amino-acid sequence, 271 residues long: Putative hydro-lyase jk0403 (271 aa).

The protein belongs to the D-glutamate cyclase family.

The polypeptide is Putative hydro-lyase jk0403 (Corynebacterium jeikeium (strain K411)).